The chain runs to 475 residues: Ribulose bisphosphate carboxylase large chain (475 aa).

A propeptide spanning residues 1–2 (MS) is cleaved from the precursor. Proline 3 carries the N-acetylproline modification. Lysine 14 bears the N6,N6,N6-trimethyllysine mark. Substrate contacts are provided by asparagine 123 and threonine 173. The active-site Proton acceptor is the lysine 175. Lysine 177 contacts substrate. Lysine 201, aspartate 203, and glutamate 204 together coordinate Mg(2+). N6-carboxylysine is present on lysine 201. The active-site Proton acceptor is the histidine 294. Residues arginine 295, histidine 327, and serine 379 each contribute to the substrate site.

Belongs to the RuBisCO large chain family. Type I subfamily. In terms of assembly, heterohexadecamer of 8 large chains and 8 small chains; disulfide-linked. The disulfide link is formed within the large subunit homodimers. It depends on Mg(2+) as a cofactor. The disulfide bond which can form in the large chain dimeric partners within the hexadecamer appears to be associated with oxidative stress and protein turnover.

Its subcellular location is the plastid. The protein resides in the chloroplast. The enzyme catalyses 2 (2R)-3-phosphoglycerate + 2 H(+) = D-ribulose 1,5-bisphosphate + CO2 + H2O. It catalyses the reaction D-ribulose 1,5-bisphosphate + O2 = 2-phosphoglycolate + (2R)-3-phosphoglycerate + 2 H(+). In terms of biological role, ruBisCO catalyzes two reactions: the carboxylation of D-ribulose 1,5-bisphosphate, the primary event in carbon dioxide fixation, as well as the oxidative fragmentation of the pentose substrate in the photorespiration process. Both reactions occur simultaneously and in competition at the same active site. The sequence is that of Ribulose bisphosphate carboxylase large chain from Picea sitchensis (Sitka spruce).